The following is a 429-amino-acid chain: Enolase (429 aa).

Gln-163 contributes to the (2R)-2-phosphoglycerate binding site. The Proton donor role is filled by Glu-205. 3 residues coordinate Mg(2+): Asp-242, Glu-286, and Asp-313. (2R)-2-phosphoglycerate contacts are provided by Lys-338, Arg-367, Ser-368, and Lys-389. Residue Lys-338 is the Proton acceptor of the active site.

It belongs to the enolase family. It depends on Mg(2+) as a cofactor.

The protein resides in the cytoplasm. The protein localises to the secreted. Its subcellular location is the cell surface. It catalyses the reaction (2R)-2-phosphoglycerate = phosphoenolpyruvate + H2O. It functions in the pathway carbohydrate degradation; glycolysis; pyruvate from D-glyceraldehyde 3-phosphate: step 4/5. In terms of biological role, catalyzes the reversible conversion of 2-phosphoglycerate (2-PG) into phosphoenolpyruvate (PEP). It is essential for the degradation of carbohydrates via glycolysis. In Citrifermentans bemidjiense (strain ATCC BAA-1014 / DSM 16622 / JCM 12645 / Bem) (Geobacter bemidjiensis), this protein is Enolase.